The sequence spans 260 residues: DNA repair protein RecO (260 aa).

The disordered stretch occupies residues 239 to 260; it reads SAGVAAARKAGGDGSDGDEGEQ.

This sequence belongs to the RecO family.

In terms of biological role, involved in DNA repair and RecF pathway recombination. The chain is DNA repair protein RecO from Sodalis glossinidius (strain morsitans).